Here is a 442-residue protein sequence, read N- to C-terminus: Interferon-related developmental regulator 2 (442 aa).

Basic residues predominate over residues 1–15 (MPRARKGNTLRKGGQ). Residues 1-71 (MPRARKGNTL…DVVDEQGQQE (71 aa)) form a disordered region. The segment covering 43–56 (TASECPSLLSTTAE) has biased composition (polar residues).

The protein belongs to the IFRD family. In terms of assembly, associates with ribosomes; promoting ribosome inactivation. Expressed in many tissues including heart, brain, placenta, lung, liver, skeletal muscle, kidney and pancreas.

Its function is as follows. Ribosome-binding protein that acts as an inhibitor of mRNA translation by promoting ribosome inactivation. Associates with the P- and E-sites of the ribosome and inserts a C-terminal helix into the mRNA exit channel to preclude translation. This chain is Interferon-related developmental regulator 2, found in Homo sapiens (Human).